Consider the following 283-residue polypeptide: Pantothenate synthetase (283 aa).

Methionine 34 to histidine 41 contacts ATP. The Proton donor role is filled by histidine 41. Residue glutamine 65 participates in (R)-pantoate binding. Glutamine 65 serves as a coordination point for beta-alanine. Residue glycine 152–aspartate 155 coordinates ATP. (R)-pantoate is bound at residue glutamine 158. Residues valine 181 and methionine 189–arginine 192 each bind ATP.

The protein belongs to the pantothenate synthetase family. As to quaternary structure, homodimer.

The protein localises to the cytoplasm. The enzyme catalyses (R)-pantoate + beta-alanine + ATP = (R)-pantothenate + AMP + diphosphate + H(+). The protein operates within cofactor biosynthesis; (R)-pantothenate biosynthesis; (R)-pantothenate from (R)-pantoate and beta-alanine: step 1/1. Catalyzes the condensation of pantoate with beta-alanine in an ATP-dependent reaction via a pantoyl-adenylate intermediate. The chain is Pantothenate synthetase from Nitrobacter hamburgensis (strain DSM 10229 / NCIMB 13809 / X14).